Reading from the N-terminus, the 306-residue chain is Porphobilinogen deaminase (306 aa).

The residue at position 244 (Cys244) is an S-(dipyrrolylmethanemethyl)cysteine.

This sequence belongs to the HMBS family. In terms of assembly, monomer. Requires dipyrromethane as cofactor.

It carries out the reaction 4 porphobilinogen + H2O = hydroxymethylbilane + 4 NH4(+). It participates in porphyrin-containing compound metabolism; protoporphyrin-IX biosynthesis; coproporphyrinogen-III from 5-aminolevulinate: step 2/4. Its function is as follows. Tetrapolymerization of the monopyrrole PBG into the hydroxymethylbilane pre-uroporphyrinogen in several discrete steps. The chain is Porphobilinogen deaminase from Streptococcus sanguinis (strain SK36).